The chain runs to 520 residues: 2-methylcitrate dehydratase, mitochondrial (520 aa).

The transit peptide at 1–37 (MRAFRSAANFGAASNIYRKSFTPASIASNRFVSARMS) directs the protein to the mitochondrion.

The protein belongs to the PrpD family. As to quaternary structure, monomer.

Its subcellular location is the mitochondrion. It carries out the reaction (2S,3S)-2-methylcitrate = 2-methyl-cis-aconitate + H2O. It participates in organic acid metabolism; propanoate degradation. Its activity is regulated as follows. Several bivalent metal ions, such as nickel, copper, zinc, mercury, and lead, inhibit the activity to some extent. Inhibited by structural analogs such as citrate, cis-aconitate, isocitrate, 2-methylisocitrate, tricarballylate and fluorocitrate, but not by trans-aconitate or adipate. Component of the methylcitrate cycle that catalyzes the dehydration of 2-methylcitrate to 2-methyl-cis-aconitate. The methylcitrate cycle is a metabolic pathway for the consumption of propionic acid. The polypeptide is 2-methylcitrate dehydratase, mitochondrial (Yarrowia lipolytica (strain CLIB 122 / E 150) (Yeast)).